Here is an 891-residue protein sequence, read N- to C-terminus: Probable serine/threonine-protein kinase mkcC (891 aa).

5 disordered regions span residues 24 to 70, 85 to 121, 264 to 435, 495 to 526, and 565 to 588; these read IELN…TATI, ANNN…APSS, DDPQ…AREK, NSLG…PEVS, and TTAS…DDYD. Positions 29-41 are enriched in low complexity; sequence QEEQQQPEQQEQP. The span at 45-58 shows a compositional bias: basic and acidic residues; sequence EELKDNNEKIKTSE. Composition is skewed to low complexity over residues 61-70, 86-105, 297-314, 322-360, and 379-397; these read TTTTTTTATI, NNNT…LNNN, STSN…TTGK, SNSS…SGTS, and TTGN…TTSS. The segment covering 422 to 432 has biased composition (basic residues); sequence RKRKEQKRSRA. The span at 495–522 shows a compositional bias: low complexity; that stretch reads NSLGSSINKNNSNNTTTTTTTTNTNNKS. The Protein kinase domain maps to 616–864; sequence YKNLKQIGSG…AEQLLKHPWI (249 aa). ATP contacts are provided by residues 622-630 and K645; that span reads IGSGGFGSV. D735 functions as the Proton acceptor in the catalytic mechanism.

The protein belongs to the protein kinase superfamily. STE Ser/Thr protein kinase family. STE20 subfamily. It depends on Mg(2+) as a cofactor.

It catalyses the reaction L-seryl-[protein] + ATP = O-phospho-L-seryl-[protein] + ADP + H(+). The catalysed reaction is L-threonyl-[protein] + ATP = O-phospho-L-threonyl-[protein] + ADP + H(+). The polypeptide is Probable serine/threonine-protein kinase mkcC (Dictyostelium discoideum (Social amoeba)).